A 398-amino-acid polypeptide reads, in one-letter code: Putative F-box protein At3g17620 (398 aa).

The 45-residue stretch at 1–45 folds into the F-box domain; it reads MMSDLPRDLLEERLSRVPVKSLREARFTCKNWKTLSKKRSFTKKH.

The polypeptide is Putative F-box protein At3g17620 (Arabidopsis thaliana (Mouse-ear cress)).